We begin with the raw amino-acid sequence, 1040 residues long: Multidrug resistance protein MdtB (1040 aa).

12 helical membrane-spanning segments follow: residues 25–45 (LLMA…PVAA), 347–367 (LMLA…NIPA), 369–389 (IIPG…MVFL), 396–416 (LTLM…IVVI), 440–460 (IGFT…PLLF), 472–492 (FAVT…TLTP), 537–557 (WLTL…WIVI), 863–883 (LGST…VLGV), 888–908 (FIHP…ALLA), 910–930 (IIAG…LIGI), 968–988 (ILMT…STGV), and 998–1018 (IAMV…TPVI).

It belongs to the resistance-nodulation-cell division (RND) (TC 2.A.6) family. MdtB subfamily. In terms of assembly, part of a tripartite efflux system composed of MdtA, MdtB and MdtC. MdtB forms a heteromultimer with MdtC.

The protein resides in the cell inner membrane. The polypeptide is Multidrug resistance protein MdtB (Salmonella gallinarum (strain 287/91 / NCTC 13346)).